A 291-amino-acid chain; its full sequence is Undecaprenyl-diphosphatase (291 aa).

8 consecutive transmembrane segments (helical) span residues 1–21 (MFII…LTEF), 48–68 (SAFT…AWVF), 102–122 (LHVL…DDFI), 126–146 (LFSV…MIIA), 162–182 (ISYF…WPGF), 203–223 (SDFT…LSLL), 231–251 (IADI…GLIA), and 267–287 (FAIY…GFGI).

This sequence belongs to the UppP family.

The protein localises to the cell membrane. It catalyses the reaction di-trans,octa-cis-undecaprenyl diphosphate + H2O = di-trans,octa-cis-undecaprenyl phosphate + phosphate + H(+). Catalyzes the dephosphorylation of undecaprenyl diphosphate (UPP). Confers resistance to bacitracin. This chain is Undecaprenyl-diphosphatase, found in Staphylococcus aureus (strain COL).